Consider the following 427-residue polypeptide: Trigger factor (427 aa).

The region spanning 160 to 240 (TDTVIGDVEK…VKEVKRLELP (81 aa)) is the PPIase FKBP-type domain.

It belongs to the FKBP-type PPIase family. Tig subfamily.

The protein resides in the cytoplasm. It carries out the reaction [protein]-peptidylproline (omega=180) = [protein]-peptidylproline (omega=0). Its function is as follows. Involved in protein export. Acts as a chaperone by maintaining the newly synthesized protein in an open conformation. Functions as a peptidyl-prolyl cis-trans isomerase. This is Trigger factor from Chlorobium phaeobacteroides (strain DSM 266 / SMG 266 / 2430).